A 442-amino-acid chain; its full sequence is 3-phosphoshikimate 1-carboxyvinyltransferase (442 aa).

3-phosphoshikimate is bound by residues K25, S26, and R30. K25 serves as a coordination point for phosphoenolpyruvate. G96 and R124 together coordinate phosphoenolpyruvate. Residues S171, S172, Q173, S203, D325, and K352 each coordinate 3-phosphoshikimate. Phosphoenolpyruvate is bound at residue Q173. D325 acts as the Proton acceptor in catalysis. 3 residues coordinate phosphoenolpyruvate: R356, R400, and K425.

This sequence belongs to the EPSP synthase family. As to quaternary structure, monomer.

The protein localises to the cytoplasm. The catalysed reaction is 3-phosphoshikimate + phosphoenolpyruvate = 5-O-(1-carboxyvinyl)-3-phosphoshikimate + phosphate. It functions in the pathway metabolic intermediate biosynthesis; chorismate biosynthesis; chorismate from D-erythrose 4-phosphate and phosphoenolpyruvate: step 6/7. Its function is as follows. Catalyzes the transfer of the enolpyruvyl moiety of phosphoenolpyruvate (PEP) to the 5-hydroxyl of shikimate-3-phosphate (S3P) to produce enolpyruvyl shikimate-3-phosphate and inorganic phosphate. The chain is 3-phosphoshikimate 1-carboxyvinyltransferase from Bordetella pertussis (strain Tohama I / ATCC BAA-589 / NCTC 13251).